The chain runs to 195 residues: MLRFAVIGHKAVSTPDFSLNDMPGGAGRMDVLCRCINASFFLSHDLRRDTECFLILKGGEQADPANTVTLRFSGEKIKSLNPDERSAGALIKKALVTIPEEEYQRAAPGISIRKSGLAKLLEEHPFAVLDENGEDIRTAETLPENFILSDHQNFTEEEMELIKDLPKYSVGPRVLHADHTIIIILNEFDRRGEQA.

Position 129 (leucine 129) interacts with S-adenosyl-L-methionine.

The protein belongs to the methyltransferase superfamily. TrmY family. Homodimer.

The protein localises to the cytoplasm. It catalyses the reaction pseudouridine(54) in tRNA + S-adenosyl-L-methionine = N(1)-methylpseudouridine(54) in tRNA + S-adenosyl-L-homocysteine + H(+). Functionally, specifically catalyzes the N1-methylation of pseudouridine at position 54 (Psi54) in tRNAs. In Methanocorpusculum labreanum (strain ATCC 43576 / DSM 4855 / Z), this protein is tRNA (pseudouridine(54)-N(1))-methyltransferase.